Reading from the N-terminus, the 521-residue chain is Probable protein phosphatase 2C 16 (521 aa).

The PPM-type phosphatase domain maps to 21 to 327 (KYVVSSMQGW…ENTTVILVQF (307 aa)). Mn(2+) contacts are provided by D57, G58, Q276, and E318. The tract at residues 354-431 (AAPAGASDTS…ADADDGAPKP (78 aa)) is disordered.

Belongs to the PP2C family. Requires Mg(2+) as cofactor. The cofactor is Mn(2+).

The enzyme catalyses O-phospho-L-seryl-[protein] + H2O = L-seryl-[protein] + phosphate. It catalyses the reaction O-phospho-L-threonyl-[protein] + H2O = L-threonyl-[protein] + phosphate. This is Probable protein phosphatase 2C 16 from Oryza sativa subsp. japonica (Rice).